The following is a 240-amino-acid chain: tRNA (guanine-N(1)-)-methyltransferase (240 aa).

S-adenosyl-L-methionine-binding positions include Gly-110 and 129 to 134 (LGDFVL).

Belongs to the RNA methyltransferase TrmD family. As to quaternary structure, homodimer.

Its subcellular location is the cytoplasm. It catalyses the reaction guanosine(37) in tRNA + S-adenosyl-L-methionine = N(1)-methylguanosine(37) in tRNA + S-adenosyl-L-homocysteine + H(+). Its function is as follows. Specifically methylates guanosine-37 in various tRNAs. The protein is tRNA (guanine-N(1)-)-methyltransferase of Clostridium botulinum (strain Loch Maree / Type A3).